A 422-amino-acid chain; its full sequence is UDP-N-acetylglucosamine 1-carboxyvinyltransferase (422 aa).

22–23 (KN) serves as a coordination point for phosphoenolpyruvate. Residue arginine 93 coordinates UDP-N-acetyl-alpha-D-glucosamine. The active-site Proton donor is cysteine 117. Cysteine 117 is modified (2-(S-cysteinyl)pyruvic acid O-phosphothioketal). UDP-N-acetyl-alpha-D-glucosamine contacts are provided by residues 122–126 (RPVDL), 162–165 (KVSV), aspartate 307, and isoleucine 329.

It belongs to the EPSP synthase family. MurA subfamily.

The protein localises to the cytoplasm. It carries out the reaction phosphoenolpyruvate + UDP-N-acetyl-alpha-D-glucosamine = UDP-N-acetyl-3-O-(1-carboxyvinyl)-alpha-D-glucosamine + phosphate. It participates in cell wall biogenesis; peptidoglycan biosynthesis. Functionally, cell wall formation. Adds enolpyruvyl to UDP-N-acetylglucosamine. In Hamiltonella defensa subsp. Acyrthosiphon pisum (strain 5AT), this protein is UDP-N-acetylglucosamine 1-carboxyvinyltransferase.